Consider the following 174-residue polypeptide: Cytochrome c-550-like protein (174 aa).

The N-terminal stretch at 1-37 is a signal peptide; that stretch reads MPGQTQGAKRWRVPGRGWRWAGILLLVWLGLASPAAG. Residues Cys-82, Cys-85, His-86, and Cys-136 each contribute to the heme c site.

Belongs to the cytochrome c family. PsbV subfamily. The cofactor is heme c.

The protein resides in the cellular thylakoid membrane. Functionally, possible low-potential cytochrome c. The polypeptide is Cytochrome c-550-like protein (psbV2) (Synechococcus sp. (strain JA-3-3Ab) (Cyanobacteria bacterium Yellowstone A-Prime)).